We begin with the raw amino-acid sequence, 242 residues long: Histone-lysine N-methyltransferase set-1 (242 aa).

The disordered stretch occupies residues 1–61 (MKVAAKKLAT…TRSRKGVSVK (61 aa)). Residues 30–43 (SENPSSLASHSSSS) are compositionally biased toward low complexity. The region spanning 104–226 (RLLEVYKDVV…QGEELLYDYG (123 aa)) is the SET domain. S-adenosyl-L-methionine-binding positions include 114–116 (KGR), Tyr-159, and 186–187 (NH).

Belongs to the class V-like SAM-binding methyltransferase superfamily. Histone-lysine methyltransferase family. PR/SET subfamily. In embryos, it is expressed ubiquitously. In late embryos, it is expressed in hypodermal seam cells. In L3 and L4 larvae and thereafter, it is expressed in vulval precursor cells. In adult males, it is also expressed in 6 unidentified posterior cells.

Its subcellular location is the nucleus. It is found in the chromosome. It catalyses the reaction L-lysyl(20)-[histone H4] + S-adenosyl-L-methionine = N(6)-methyl-L-lysyl(20)-[histone H4] + S-adenosyl-L-homocysteine + H(+). Histone methyltransferase that specifically monomethylates 'Lys-20' of histone H4 (H4K20me1). H4K20me1 is enriched on hermaphrodite X chromosomes and during mitosis. Involved in dosage compensation by repression of X-linked gene expression in hermaphrodites. Plays a role in growth and body fat regulation downstream of the TOR complex 2 pathway. The sequence is that of Histone-lysine N-methyltransferase set-1 (set-1) from Caenorhabditis elegans.